The sequence spans 94 residues: UPF0768 protein YBL029C-A (94 aa).

This sequence belongs to the UPF0768 family.

It is found in the cell membrane. The chain is UPF0768 protein YBL029C-A from Saccharomyces cerevisiae (strain ATCC 204508 / S288c) (Baker's yeast).